The chain runs to 167 residues: MAGVNDAIRDSVLFTTADSIISWSRRSALWPETFGIACCAIEMISAGCARYDLDRFGVVFRPSPRQSDVMIIAGTVTRKFAPVVRRLYDQMPEPRWVIAMGTCAISGGVYNTYAVVQGSETFVPVDVHVPGCPPRPEALMHGFLLLQEKIKKSRALTGTPLGRVIAS.

Positions 38, 39, 103, and 132 each coordinate [4Fe-4S] cluster.

This sequence belongs to the complex I 20 kDa subunit family. As to quaternary structure, NDH-1 is composed of 14 different subunits. Subunits NuoB, C, D, E, F, and G constitute the peripheral sector of the complex. It depends on [4Fe-4S] cluster as a cofactor.

It is found in the cell inner membrane. The catalysed reaction is a quinone + NADH + 5 H(+)(in) = a quinol + NAD(+) + 4 H(+)(out). In terms of biological role, NDH-1 shuttles electrons from NADH, via FMN and iron-sulfur (Fe-S) centers, to quinones in the respiratory chain. The immediate electron acceptor for the enzyme in this species is believed to be ubiquinone. Couples the redox reaction to proton translocation (for every two electrons transferred, four hydrogen ions are translocated across the cytoplasmic membrane), and thus conserves the redox energy in a proton gradient. This chain is NADH-quinone oxidoreductase subunit B 2, found in Rhizobium meliloti (strain 1021) (Ensifer meliloti).